We begin with the raw amino-acid sequence, 254 residues long: 3-deoxy-manno-octulosonate cytidylyltransferase (254 aa).

It belongs to the KdsB family.

Its subcellular location is the cytoplasm. The catalysed reaction is 3-deoxy-alpha-D-manno-oct-2-ulosonate + CTP = CMP-3-deoxy-beta-D-manno-octulosonate + diphosphate. The protein operates within nucleotide-sugar biosynthesis; CMP-3-deoxy-D-manno-octulosonate biosynthesis; CMP-3-deoxy-D-manno-octulosonate from 3-deoxy-D-manno-octulosonate and CTP: step 1/1. It participates in bacterial outer membrane biogenesis; lipopolysaccharide biosynthesis. In terms of biological role, activates KDO (a required 8-carbon sugar) for incorporation into bacterial lipopolysaccharide in Gram-negative bacteria. The chain is 3-deoxy-manno-octulosonate cytidylyltransferase from Ectopseudomonas mendocina (strain ymp) (Pseudomonas mendocina).